Reading from the N-terminus, the 220-residue chain is Uracil-DNA glycosylase (220 aa).

The Proton acceptor role is filled by D60.

Belongs to the uracil-DNA glycosylase (UDG) superfamily. UNG family.

Its subcellular location is the cytoplasm. The enzyme catalyses Hydrolyzes single-stranded DNA or mismatched double-stranded DNA and polynucleotides, releasing free uracil.. In terms of biological role, excises uracil residues from the DNA which can arise as a result of misincorporation of dUMP residues by DNA polymerase or due to deamination of cytosine. The polypeptide is Uracil-DNA glycosylase (Francisella tularensis subsp. tularensis (strain FSC 198)).